The primary structure comprises 357 residues: MFDQLESIVGRYEELGELLSDPEVVSDTKRFMELSREEADLRDKVATYNEYKKVLETISDSEEMLGEGGLDDEMKEMLKEELSSAKSQKEVLEEEIKILLLPKDPNDGKNIILEIRGAAGGDEAALFAGDLLNMYQHFSESQGWKFEIMEANITGIGGYKEVSALISGPSVYSKLKYESGAHRVQRVPVTETQGRVHTSTATVLVMPEVEEFEMTIEQKDLRVDIYHASGAGGQNVNKVATAVRMVHLPTGIKVEMQEERTQQKNRDKAIKLLNTKVFDYYQQIELDKQNAERKSTVGTGDRSERIRTYNFPQNRVTDHRIGLTLQKLDSILSGKMDEVIDALIVYDQTKKLEELNK.

The residue at position 234 (Gln234) is an N5-methylglutamine.

Belongs to the prokaryotic/mitochondrial release factor family. Post-translationally, methylated by PrmC. Methylation increases the termination efficiency of RF1.

It localises to the cytoplasm. In terms of biological role, peptide chain release factor 1 directs the termination of translation in response to the peptide chain termination codons UAG and UAA. This is Peptide chain release factor 1 from Lactococcus lactis subsp. cremoris (strain SK11).